A 320-amino-acid polypeptide reads, in one-letter code: MKTVTGFASATIGNVACGFDVLGFAITEPGDEVILTLREERSGELPVSITSITGDGGALPRNPKKNTSSFVVLKFLEYIRTNKGIDFEGHIELELKKNLPLSSGMGSSAASAAAALVAANELMGRPCNKMELVNFAIEGERVACGSAHADNAAPAMLGNFVLIRSYNPIDLITIPSPDNLYCTLVHPHIEVRTAYARSVLPRMISLKTATEQWGNVGALISGLLTSDYELIGRSLVDVIAEPKRAPLIPGFYDVKHAALEAGAIGCSIAGSGPSIFAFSSSPETASRVGEAMQTAFSTLKEKLQSDIWISPVCKQGAKVI.

100–110 is a binding site for ATP; sequence PLSSGMGSSAA.

This sequence belongs to the GHMP kinase family. Homoserine kinase subfamily.

It is found in the cytoplasm. It carries out the reaction L-homoserine + ATP = O-phospho-L-homoserine + ADP + H(+). The protein operates within amino-acid biosynthesis; L-threonine biosynthesis; L-threonine from L-aspartate: step 4/5. In terms of biological role, catalyzes the ATP-dependent phosphorylation of L-homoserine to L-homoserine phosphate. The sequence is that of Homoserine kinase from Chlorobium phaeobacteroides (strain BS1).